A 200-amino-acid chain; its full sequence is Methylamine utilization protein MauD (200 aa).

Residues 4-24 (FLIASNILLWLAFLGVTVVML) form a helical membrane-spanning segment. In terms of domain architecture, Thioredoxin spans 49-183 (PDIGDAAPEF…LESLLEADRT (135 aa)).

It localises to the membrane. It participates in one-carbon metabolism; methylamine degradation. Functionally, may be specifically involved in the processing, transport, and/or maturation of the MADH beta-subunit. The polypeptide is Methylamine utilization protein MauD (mauD) (Paracoccus denitrificans).